Reading from the N-terminus, the 413-residue chain is Aspartate kinase (413 aa).

2 ACT domains span residues 267-341 (LTIR…GDTK) and 347-413 (IVGV…RQGE).

Belongs to the aspartokinase family. As to quaternary structure, homotrimer. In the presence of inhibitory amino acids the Stokes radius of the protein increases, suggesting its oligomeric state may change.

Its subcellular location is the cytoplasm. The enzyme catalyses L-aspartate + ATP = 4-phospho-L-aspartate + ADP. It functions in the pathway amino-acid biosynthesis; L-lysine biosynthesis via DAP pathway; (S)-tetrahydrodipicolinate from L-aspartate: step 1/4. Its pathway is amino-acid biosynthesis; L-methionine biosynthesis via de novo pathway; L-homoserine from L-aspartate: step 1/3. It participates in amino-acid biosynthesis; L-threonine biosynthesis; L-threonine from L-aspartate: step 1/5. Activated by L-lysine, L-methionine, and L-isoleucine. L-threonine, at low concentrations, is a mild activator and has a weak inhibitory effect only at concentrations over 10 mM. Strongly feedback inhibited by the concerted combination of L-lysine and L-threonine and slightly feedback inhibited by the concerted combination of L-threonine and L-methionine. Activated by the combination of L-methionine and L-lysine, L-methionine and L-isoleucine and L-lysine and L-isoleucine. Involved in the biosynthesis of L-aspartate-beta-semialdehyde which is a central intermediate in the biosynthesis of different amino acids (L-lysine, L-methionine, L-threonine). Catalyzes the phosphorylation of the beta-carboxyl group of L-aspartate to yield 4-phospho-L-aspartate. In Pseudomonas fluorescens (strain SBW25), this protein is Aspartate kinase.